We begin with the raw amino-acid sequence, 276 residues long: Rhomboid protease GlpG (276 aa).

6 helical membrane passes run 94–114, 142–162, 169–189, 192–212, 229–249, and 250–270; these read GPVT…MSLI, IFMH…WYLG, LGSG…GYVQ, FSGP…GYVW, LIIF…GMSM, and ANGA…VDTL. The active-site Nucleophile is the Ser-201. The active site involves His-254.

This sequence belongs to the peptidase S54 family.

It localises to the cell inner membrane. The catalysed reaction is Cleaves type-1 transmembrane domains using a catalytic dyad composed of serine and histidine that are contributed by different transmembrane domains.. In terms of biological role, rhomboid-type serine protease that catalyzes intramembrane proteolysis. This is Rhomboid protease GlpG from Salmonella typhi.